Consider the following 238-residue polypeptide: ATP synthase subunit a (238 aa).

7 helical membrane-spanning segments follow: residues 35-55 (SNVI…TLAT), 61-81 (VPSG…SFVV), 94-114 (FLCA…VPGL), 128-148 (ALTV…AGYI), 151-171 (FMGP…ISHL), 190-210 (IVLV…MYFL), and 211-231 (FSLA…IYLK).

This sequence belongs to the ATPase A chain family. In terms of assembly, F-type ATPases have 2 components, CF(1) - the catalytic core - and CF(0) - the membrane proton channel. CF(1) has five subunits: alpha(3), beta(3), gamma(1), delta(1), epsilon(1). CF(0) has three main subunits: a(1), b(2) and c(9-12). The alpha and beta chains form an alternating ring which encloses part of the gamma chain. CF(1) is attached to CF(0) by a central stalk formed by the gamma and epsilon chains, while a peripheral stalk is formed by the delta and b chains.

It localises to the cell inner membrane. Key component of the proton channel; it plays a direct role in the translocation of protons across the membrane. This chain is ATP synthase subunit a, found in Solidesulfovibrio magneticus (strain ATCC 700980 / DSM 13731 / RS-1) (Desulfovibrio magneticus).